A 619-amino-acid chain; its full sequence is Mitochondrial Rho GTPase 1 (619 aa).

Residues 1-593 lie on the Cytoplasmic side of the membrane; that stretch reads MKKDVRILLV…TQADLKSSTF (593 aa). One can recognise a Miro 1 domain in the interval 2-168; sequence KKDVRILLVG…FYYAQKAVLH (167 aa). Arginine 14, glycine 16, lysine 17, threonine 18, and serine 19 together coordinate GTP. Position 18 (threonine 18) interacts with Mg(2+). The Mg(2+) site is built by proline 35 and aspartate 57. GTP contacts are provided by serine 59, asparagine 118, lysine 119, aspartate 121, alanine 149, and lysine 150. 2 EF-hand domains span residues 184 to 219 and 304 to 339; these read ACIK…CFNT and HAYL…FPYM. Positions 197, 199, 201, 203, 208, 317, 319, 321, 323, and 328 each coordinate Ca(2+). A Miro 2 domain is found at 417–580; it reads RNVFRCNVVG…FVKLTTMAMY (164 aa). Glycine 429, cysteine 430, glycine 431, lysine 432, serine 433, glycine 434, arginine 448, lysine 529, aspartate 531, threonine 559, and cysteine 560 together coordinate GTP. Glycine 429 lines the Mg(2+) pocket. Residues 594 to 616 form a helical; Anchor for type IV membrane protein membrane-spanning segment; that stretch reads WLRASFGATVFAFLGFAMYKALI. At 617 to 619 the chain is on the mitochondrial intermembrane side; sequence KQR.

This sequence belongs to the mitochondrial Rho GTPase family. As to quaternary structure, homodimer.

The protein resides in the mitochondrion outer membrane. The catalysed reaction is GTP + H2O = GDP + phosphate + H(+). It carries out the reaction ATP + H2O = ADP + phosphate + H(+). It catalyses the reaction UTP + H2O = UDP + phosphate + H(+). Its function is as follows. Atypical mitochondrial nucleoside-triphosphatase (NTPase) involved in mitochondrial trafficking. Probably involved in control of anterograde transport of mitochondria and their subcellular distribution. Can hydrolyze GTP, ATP and UTP. The polypeptide is Mitochondrial Rho GTPase 1 (RHOT1) (Gallus gallus (Chicken)).